Consider the following 122-residue polypeptide: UPF0102 protein CLH_1204 (122 aa).

The protein belongs to the UPF0102 family.

The protein is UPF0102 protein CLH_1204 of Clostridium botulinum (strain Alaska E43 / Type E3).